We begin with the raw amino-acid sequence, 601 residues long: Elongation factor 4 (601 aa).

Positions 4-186 (SFIRNFAIIA…SIVHLVPPPK (183 aa)) constitute a tr-type G domain. Residues 16 to 21 (DHGKST) and 133 to 136 (NKID) each bind GTP.

It belongs to the TRAFAC class translation factor GTPase superfamily. Classic translation factor GTPase family. LepA subfamily.

It localises to the cell inner membrane. The enzyme catalyses GTP + H2O = GDP + phosphate + H(+). In terms of biological role, required for accurate and efficient protein synthesis under certain stress conditions. May act as a fidelity factor of the translation reaction, by catalyzing a one-codon backward translocation of tRNAs on improperly translocated ribosomes. Back-translocation proceeds from a post-translocation (POST) complex to a pre-translocation (PRE) complex, thus giving elongation factor G a second chance to translocate the tRNAs correctly. Binds to ribosomes in a GTP-dependent manner. The chain is Elongation factor 4 from Koribacter versatilis (strain Ellin345).